Reading from the N-terminus, the 68-residue chain is Lantibiotic mersacidin (68 aa).

The segment at 1–28 (MSQEAIIRSWKDPFSRENSTQNPAGNPF) is disordered. A propeptide spanning residues 1–48 (MSQEAIIRSWKDPFSRENSTQNPAGNPFSELKEAQMDKLVGAGDMEAA) is cleaved from the precursor. A cross-link (beta-methyllanthionine (Cys-Thr)) is located at residues 49–50 (CT). 2 consecutive cross-links (beta-methyllanthionine (Thr-Cys)) follow at residues 52–60 (TLPGGGGVC) and 61–66 (TLTSEC). A cross-link (S-(2-aminovinyl)-3-methyl-D-cysteine (Thr-Cys)) is located at residues 63–68 (TSECIC). At S64 the chain carries 2,3-didehydroalanine (Ser).

Belongs to the type B lantibiotic family. In terms of processing, maturation of lantibiotics involves the enzymatic conversion of Thr, and Ser into dehydrated AA and the formation of thioether bonds with cysteine. The carboxy-terminal beta-methyllanthionine undergoes decarboxylation. This is followed by membrane translocation and cleavage of the modified precursor.

In terms of biological role, kills a number of Gram-positive bacteria. Acts at the level of cell wall biosynthesis by interfering with bacterial peptidoglycan biosynthesis. Specifically inhibits the conversion of the lipid II intermediate into polymeric nascent glycan strands by transglycosylation. May interact with the peptidoglycan precursor rather than with the enzyme. The sequence is that of Lantibiotic mersacidin (mrsA) from Bacillus sp. (strain HIL-Y85/54728).